Reading from the N-terminus, the 283-residue chain is Ribosomal RNA small subunit methyltransferase A (283 aa).

Residues Asn-13, Leu-15, Gly-39, Glu-59, Asp-87, and Asn-108 each coordinate S-adenosyl-L-methionine.

The protein belongs to the class I-like SAM-binding methyltransferase superfamily. rRNA adenine N(6)-methyltransferase family. RsmA subfamily.

Its subcellular location is the cytoplasm. It carries out the reaction adenosine(1518)/adenosine(1519) in 16S rRNA + 4 S-adenosyl-L-methionine = N(6)-dimethyladenosine(1518)/N(6)-dimethyladenosine(1519) in 16S rRNA + 4 S-adenosyl-L-homocysteine + 4 H(+). Functionally, specifically dimethylates two adjacent adenosines (A1518 and A1519) in the loop of a conserved hairpin near the 3'-end of 16S rRNA in the 30S particle. May play a critical role in biogenesis of 30S subunits. The protein is Ribosomal RNA small subunit methyltransferase A of Helicobacter hepaticus (strain ATCC 51449 / 3B1).